We begin with the raw amino-acid sequence, 736 residues long: Phosphoribosylformylglycinamidine synthase subunit PurL (736 aa).

His-49 is an active-site residue. Positions 52 and 91 each coordinate ATP. Glu-93 contacts Mg(2+). Substrate-binding positions include 94–97 and Arg-116; that span reads SHNH. His-95 (proton acceptor) is an active-site residue. Asp-117 contributes to the Mg(2+) binding site. Gln-240 lines the substrate pocket. Mg(2+) is bound at residue Asp-268. A substrate-binding site is contributed by 312-314; that stretch reads ESQ. ATP is bound by residues Asp-493 and Gly-530. Asn-531 is a Mg(2+) binding site. Substrate is bound at residue Ser-533.

It belongs to the FGAMS family. As to quaternary structure, monomer. Part of the FGAM synthase complex composed of 1 PurL, 1 PurQ and 2 PurS subunits.

Its subcellular location is the cytoplasm. The catalysed reaction is N(2)-formyl-N(1)-(5-phospho-beta-D-ribosyl)glycinamide + L-glutamine + ATP + H2O = 2-formamido-N(1)-(5-O-phospho-beta-D-ribosyl)acetamidine + L-glutamate + ADP + phosphate + H(+). Its pathway is purine metabolism; IMP biosynthesis via de novo pathway; 5-amino-1-(5-phospho-D-ribosyl)imidazole from N(2)-formyl-N(1)-(5-phospho-D-ribosyl)glycinamide: step 1/2. Its function is as follows. Part of the phosphoribosylformylglycinamidine synthase complex involved in the purines biosynthetic pathway. Catalyzes the ATP-dependent conversion of formylglycinamide ribonucleotide (FGAR) and glutamine to yield formylglycinamidine ribonucleotide (FGAM) and glutamate. The FGAM synthase complex is composed of three subunits. PurQ produces an ammonia molecule by converting glutamine to glutamate. PurL transfers the ammonia molecule to FGAR to form FGAM in an ATP-dependent manner. PurS interacts with PurQ and PurL and is thought to assist in the transfer of the ammonia molecule from PurQ to PurL. This chain is Phosphoribosylformylglycinamidine synthase subunit PurL, found in Rhodopseudomonas palustris (strain BisB18).